The primary structure comprises 143 residues: Putative aryl-alcohol dehydrogenase AAD15 (143 aa).

It belongs to the aldo/keto reductase family. Aldo/keto reductase 2 subfamily.

Functionally, putative aryl-alcohol dehydrogenase. This chain is Putative aryl-alcohol dehydrogenase AAD15 (AAD15), found in Saccharomyces cerevisiae (strain ATCC 204508 / S288c) (Baker's yeast).